The sequence spans 496 residues: Tripartite motif-containing protein 30A (496 aa).

The segment at cysteine 15–arginine 59 adopts an RING-type zinc-finger fold. The B box-type zinc finger occupies glutamine 91–isoleucine 132. The Zn(2+) site is built by cysteine 96, histidine 99, cysteine 118, and histidine 124. A coiled-coil region spans residues asparagine 173–histidine 239. The highly hydrophilic stretch occupies residues lysine 205 to glutamate 210. The short motif at threonine 268–threonine 276 is the Nuclear localization signal element. The region spanning aspartate 281–serine 496 is the B30.2/SPRY domain.

Homomultimer. Interacts with NR2C2/TAK1, TAB2 and TAB3. Does not interact with NLRP3, NLRC4 or TAB1. In terms of tissue distribution, highly expressed in spleen and lymph nodes (at protein level).

The protein localises to the cytoplasm. It localises to the nucleus. Its function is as follows. Trans-acting factor that regulates gene expression of interleukin 2 receptor alpha chain. May affect IL2R-alpha expression through cis-acting negative regulatory elements or through competition with proteins that bind to enhancer or activator sequences. Negatively regulates Toll-like receptor (TLR)-mediated activation of NFKB by promoting degradation of TAB2 and TAB3 and preventing TRAF6 autoubiquitination. Negatively regulates production of reactive oxygen species (ROS) which inhibits activation of the NLRP3 inflammasome complex. This, in turn, regulates activation of CASP1 and subsequent cleavage of IL1B and IL18. No activity detected against a range of retroviruses including a number of lentiviruses, gammaretroviruses and betaretroviruses. This Mus musculus (Mouse) protein is Tripartite motif-containing protein 30A (Trim30a).